We begin with the raw amino-acid sequence, 85 residues long: VDINNGESVFTANCSACHAGGNNVIMPEKTLKKDALEENEMNNIKSITYQVTNGKNAMPAFGGRLSETDIEDVANFVISQSQKGW.

Positions 14, 17, 18, and 58 each coordinate heme c.

Belongs to the cytochrome c family. PetJ subfamily. Monomer. Post-translationally, binds 1 heme c group covalently per subunit.

Its subcellular location is the plastid. It is found in the chloroplast thylakoid lumen. Its function is as follows. Functions as an electron carrier between membrane-bound cytochrome b6-f and photosystem I in oxygenic photosynthesis. The polypeptide is Cytochrome c6 (petJ) (Petalonia fascia (False kelp)).